An 852-amino-acid chain; its full sequence is Phenylalanine--tRNA ligase beta subunit (852 aa).

One can recognise a tRNA-binding domain in the interval 44–159 (PETTGPLVIG…DADLASANLK (116 aa)). A B5 domain is found at 428–510 (PEMPMITIHT…RLEGLEDIPS (83 aa)). Residues D488, D494, E497, and E498 each contribute to the Mg(2+) site. The FDX-ACB domain occupies 758–851 (SAFPAVLQDI…ATEKVGAQLR (94 aa)).

It belongs to the phenylalanyl-tRNA synthetase beta subunit family. Type 1 subfamily. Tetramer of two alpha and two beta subunits. Mg(2+) is required as a cofactor.

Its subcellular location is the cytoplasm. The catalysed reaction is tRNA(Phe) + L-phenylalanine + ATP = L-phenylalanyl-tRNA(Phe) + AMP + diphosphate + H(+). This is Phenylalanine--tRNA ligase beta subunit from Corynebacterium jeikeium (strain K411).